We begin with the raw amino-acid sequence, 229 residues long: Flagellar L-ring protein (229 aa).

The first 25 residues, 1-25, serve as a signal peptide directing secretion; that stretch reads MKQVRLLPSAPVRAVCALAVAALAG. C26 carries the N-palmitoyl cysteine lipid modification. C26 carries S-diacylglycerol cysteine lipidation.

This sequence belongs to the FlgH family. In terms of assembly, the basal body constitutes a major portion of the flagellar organelle and consists of four rings (L,P,S, and M) mounted on a central rod.

It is found in the cell outer membrane. Its subcellular location is the bacterial flagellum basal body. In terms of biological role, assembles around the rod to form the L-ring and probably protects the motor/basal body from shearing forces during rotation. The protein is Flagellar L-ring protein of Burkholderia ambifaria (strain MC40-6).